A 526-amino-acid polypeptide reads, in one-letter code: MLO-like protein 1 (526 aa).

The Extracellular segment spans residues 1–11; sequence MGHGGEGMSLE. The chain crosses the membrane as a helical span at residues 12-32; the sequence is FTPTWVVAGVCTVIVAISLAV. The Cytoplasmic segment spans residues 33–61; it reads ERLLHYFGTVLKKKKQKPLYEALQKVKEE. Residues 62 to 82 traverse the membrane as a helical segment; it reads LMLLGFISLLLTVFQGLISKF. Over 83-160 the chain is Extracellular; it reads CVKENVLMHM…LSLEALHHLH (78 aa). Residues 161–181 form a helical membrane-spanning segment; the sequence is IFIFVLAISHVTFCVLTVIFG. At 182–287 the chain is on the cytoplasmic side; sequence STRIHQWKKW…MRALEDDFKQ (106 aa). A run of 2 helical transmembrane segments spans residues 288 to 308 and 309 to 329; these read VVGISWYLWIFVVIFLLLNVN and GWHTYFWIAFIPFALLLAVGT. The Cytoplasmic segment spans residues 330–372; it reads KLEHVIAQLAHEVAEKHVAIEGDLVVKPSDEHFWFSKPQIVLY. Residues 373–393 form a helical membrane-spanning segment; that stretch reads LIHFILFQNAFEIAFFFWIWV. At 394-412 the chain is on the extracellular side; the sequence is TYGFDSCIMGQVRYIVPRL. Residues 413 to 433 form a helical membrane-spanning segment; the sequence is VIGVFIQVLCSYSTLPLYAIV. Topologically, residues 434–526 are cytoplasmic; sequence SQMGSSFKKA…NNEITPDHNN (93 aa). The tract at residues 447 to 468 is calmodulin-binding; sequence ENVQVGLVGWAQKVKQKRDLKA. The interval 471–526 is disordered; that stretch reads SNGDEGSSQAGPGPDSGSGSAPAAGPGAGFAGIQLSRVTRNNAGDTNNEITPDHNN. The span at 476–495 shows a compositional bias: low complexity; the sequence is GSSQAGPGPDSGSGSAPAAG. A compositionally biased stretch (polar residues) spans 506-520; the sequence is SRVTRNNAGDTNNEI.

It belongs to the MLO family.

The protein resides in the cell membrane. May be involved in modulation of pathogen defense and leaf cell death. Activity seems to be regulated by Ca(2+)-dependent calmodulin binding and seems not to require heterotrimeric G proteins. In Arabidopsis thaliana (Mouse-ear cress), this protein is MLO-like protein 1 (MLO1).